A 518-amino-acid polypeptide reads, in one-letter code: Chromosomal replication initiator protein DnaA (518 aa).

The tract at residues 1 to 76 is domain I, interacts with DnaA modulators; the sequence is METDGGDFPS…RALSEAYGSP (76 aa). Positions 76 to 176 are domain II; that stretch reads PIRLAVTVDP…RRPTTRIENS (101 aa). The disordered stretch occupies residues 91–174; that stretch reads LTPERTGEHS…QPRRPTTRIE (84 aa). Residues 124 to 135 are compositionally biased toward basic and acidic residues; that stretch reads DGLHLDERRSGS. Residues 136-147 show a composition bias toward acidic residues; the sequence is LEEDSPLDDSDP. The interval 177–393 is domain III, AAA+ region; the sequence is RLNPKYIFET…GALIRVTAFA (217 aa). 4 residues coordinate ATP: Gly-221, Gly-223, Lys-224, and Thr-225. Residues 394–518 form a domain IV, binds dsDNA region; it reads SLNRQPVDMQ…TNRIKKQSGA (125 aa).

The protein belongs to the DnaA family. In terms of assembly, oligomerizes as a right-handed, spiral filament on DNA at oriC.

The protein localises to the cytoplasm. In terms of biological role, plays an essential role in the initiation and regulation of chromosomal replication. ATP-DnaA binds to the origin of replication (oriC) to initiate formation of the DNA replication initiation complex once per cell cycle. Binds the DnaA box (a 9 base pair repeat at the origin) and separates the double-stranded (ds)DNA. Forms a right-handed helical filament on oriC DNA; dsDNA binds to the exterior of the filament while single-stranded (ss)DNA is stabiized in the filament's interior. The ATP-DnaA-oriC complex binds and stabilizes one strand of the AT-rich DNA unwinding element (DUE), permitting loading of DNA polymerase. After initiation quickly degrades to an ADP-DnaA complex that is not apt for DNA replication. Binds acidic phospholipids. The sequence is that of Chromosomal replication initiator protein DnaA from Kineococcus radiotolerans (strain ATCC BAA-149 / DSM 14245 / SRS30216).